A 302-amino-acid chain; its full sequence is tRNA-cytidine(32) 2-sulfurtransferase (302 aa).

A PP-loop motif motif is present at residues 45–50; it reads SGGKDS. [4Fe-4S] cluster is bound by residues Cys120, Cys123, and Cys211.

Belongs to the TtcA family. As to quaternary structure, homodimer. The cofactor is Mg(2+). [4Fe-4S] cluster serves as cofactor.

The protein resides in the cytoplasm. It carries out the reaction cytidine(32) in tRNA + S-sulfanyl-L-cysteinyl-[cysteine desulfurase] + AH2 + ATP = 2-thiocytidine(32) in tRNA + L-cysteinyl-[cysteine desulfurase] + A + AMP + diphosphate + H(+). The protein operates within tRNA modification. Catalyzes the ATP-dependent 2-thiolation of cytidine in position 32 of tRNA, to form 2-thiocytidine (s(2)C32). The sulfur atoms are provided by the cysteine/cysteine desulfurase (IscS) system. The protein is tRNA-cytidine(32) 2-sulfurtransferase of Aeromonas salmonicida (strain A449).